Consider the following 582-residue polypeptide: ATP-dependent lipid A-core flippase (582 aa).

5 consecutive transmembrane segments (helical) span residues 16 to 36, 64 to 84, 153 to 173, 253 to 273, and 275 to 295; these read LWPTIAPFKAGLIVAGIALIL, LLWMPLVVIGLMILRGITSYI, IIGLFIMMFYYSWQLSIILVV, PIIQLIASLALAFVLYAASFP, and VMDSLTAGTITVVFSSMIALM. In terms of domain architecture, ABC transmembrane type-1 spans 28 to 310; that stretch reads IVAGIALILN…LTNVNAQFQR (283 aa). The region spanning 342-578 is the ABC transporter domain; it reads LEFRNVTFTY…HGVYAQLHKM (237 aa). 376-383 contributes to the ATP binding site; it reads GRSGSGKS.

Belongs to the ABC transporter superfamily. Lipid exporter (TC 3.A.1.106) family. As to quaternary structure, homodimer.

The protein resides in the cell inner membrane. It carries out the reaction ATP + H2O + lipid A-core oligosaccharideSide 1 = ADP + phosphate + lipid A-core oligosaccharideSide 2.. Functionally, involved in lipopolysaccharide (LPS) biosynthesis. Translocates lipid A-core from the inner to the outer leaflet of the inner membrane. Transmembrane domains (TMD) form a pore in the inner membrane and the ATP-binding domain (NBD) is responsible for energy generation. The polypeptide is ATP-dependent lipid A-core flippase (Salmonella paratyphi A (strain ATCC 9150 / SARB42)).